Reading from the N-terminus, the 188-residue chain is Photosystem I assembly protein Ycf4 (188 aa).

2 consecutive transmembrane segments (helical) span residues 26 to 46 (YFWA…GLSS) and 70 to 90 (LLFY…SLLW).

It belongs to the Ycf4 family.

It localises to the cellular thylakoid membrane. Its function is as follows. Seems to be required for the assembly of the photosystem I complex. The sequence is that of Photosystem I assembly protein Ycf4 from Microcystis aeruginosa (strain NIES-843 / IAM M-2473).